A 141-amino-acid polypeptide reads, in one-letter code: Large ribosomal subunit protein uL11c (141 aa).

It belongs to the universal ribosomal protein uL11 family. As to quaternary structure, part of the ribosomal stalk of the 50S ribosomal subunit. Interacts with L10 and the large rRNA to form the base of the stalk. L10 forms an elongated spine to which L12 dimers bind in a sequential fashion forming a multimeric L10(L12)X complex.

The protein localises to the plastid. It is found in the chloroplast. In terms of biological role, forms part of the ribosomal stalk which helps the ribosome interact with GTP-bound translation factors. This Guillardia theta (Cryptophyte) protein is Large ribosomal subunit protein uL11c.